A 582-amino-acid polypeptide reads, in one-letter code: Trans-ocimene synthase, chloroplastic (582 aa).

The N-terminal 35 residues, 1-35 (MSLIIQSLPHWSRIPPRPPQLSQFQNSSRPKPLIQ), are a transit peptide targeting the chloroplast. Residues Arg-296, Asp-333, Asp-337, Arg-474, and Asp-477 each coordinate (2E)-geranyl diphosphate. Residues Asp-333 and Asp-337 each contribute to the Mg(2+) site. The short motif at 333–337 (DDIYD) is the DDXXD motif element. Mg(2+) contacts are provided by Asp-477, Thr-481, and Glu-485.

This sequence belongs to the terpene synthase family. Tpsb subfamily. Monomer. The cofactor is Mg(2+). Mn(2+) is required as a cofactor. As to expression, expressed in male and female leaves. Barely detectable in fruits and shoots.

The protein localises to the plastid. It localises to the chloroplast. It catalyses the reaction (2E)-geranyl diphosphate = (E)-beta-ocimene + diphosphate. It participates in secondary metabolite biosynthesis; terpenoid biosynthesis. Monoterpene synthase (TPS) involved in the biosynthesis of monoterpene natural products used by traditional Chinese medicine to treat headache, inflammation and intoxication. Catalyzes the conversion of (2E)-geranyl diphosphate (GPP) into (E)-beta-ocimene. The chain is Trans-ocimene synthase, chloroplastic from Litsea cubeba (Aromatic litsea).